The chain runs to 212 residues: Ras-related protein Rab-2A (212 aa).

Position 2 is an N-acetylalanine (Ala2). The segment at 2-19 is required for interaction with PRKCI; that stretch reads AYAYLFKYIIIGDTGVGK. Residues Gly16, Val17, Gly18, Lys19, Ser20, Cys21, and Thr38 each contribute to the GTP site. Mg(2+) is bound at residue Ser20. A Switch 1 motif is present at residues 37-42; sequence LTIGVE. Residues Thr38 and Asp61 each contribute to the Mg(2+) site. The Switch 2 motif lies at 63 to 72; the sequence is AGQESFRSIT. The GTP site is built by Gly64, Asn119, Lys120, Asp122, Ala150, and Lys151. 2 S-geranylgeranyl cysteine lipidation sites follow: Cys211 and Cys212.

It belongs to the small GTPase superfamily. Rab family. Interacts with PRKCI. Interacts with TRIP11. Interacts (in GTP-bound form) with GARIN1B. Interacts (GTP-bound) with HOPS complex component VPS39; interaction contributes to obtaining a functional HOPS complex that promotes autophagosome-lysosome membrane fusion driven by STX17-SNAP29-VAMP8. May interact with VPS41. It depends on Mg(2+) as a cofactor. Post-translationally, prenylated. Prenylation is required for association with cellular membranes. Brain and parietal cells.

It is found in the endoplasmic reticulum-Golgi intermediate compartment membrane. It localises to the melanosome. The protein resides in the endoplasmic reticulum membrane. The protein localises to the golgi apparatus membrane. Its subcellular location is the cytoplasmic vesicle. It is found in the secretory vesicle. It localises to the acrosome. The protein resides in the autophagosome membrane. The enzyme catalyses GTP + H2O = GDP + phosphate + H(+). Regulated by guanine nucleotide exchange factors (GEFs) which promote the exchange of bound GDP for free GTP, GTPase activating proteins (GAPs) which increase the GTP hydrolysis activity, and GDP dissociation inhibitors (GDIs) which inhibit the dissociation of the nucleotide from the GTPase. The small GTPases Rab are key regulators of intracellular membrane trafficking, from the formation of transport vesicles to their fusion with membranes. Rabs cycle between active GTP-bound and inactive GDP-bound states. In their active state, drive transport of vesicular carriers from donor organelles to acceptor organelles to regulate the membrane traffic that maintains organelle identity and morphology. RAB2A regulates autophagy by promoting autophagosome-lysosome fusion via recruitment of the HOPS endosomal tethering complex; this process involves autophagosomal RAB2A and lysosomal RAB39A recruitment of HOPS subcomplexes VPS39-VPS11 and VPS41-VPS16-VPS18-VPS33A, respectively, which assemble into a functional complex to mediate membrane tethering and SNAREs-driven membrane fusion. Required for protein transport from the endoplasmic reticulum to the Golgi complex. Regulates the compacted morphology of the Golgi. Together with RAB2B, redundantly required for efficient autophagic flux. The polypeptide is Ras-related protein Rab-2A (RAB2A) (Oryctolagus cuniculus (Rabbit)).